The primary structure comprises 440 residues: Polyprenol-phosphate-mannose-dependent alpha-(1-2)-phosphatidylinositol mannoside mannosyltransferase (440 aa).

The next 11 membrane-spanning stretches (helical) occupy residues 15-35 (LAPTIAWRVFQLLTLAGVLWV), 87-107 (LAAIAFAPFAWLSLPLASSAI), 109-129 (ATTLVLLIVATTIVLTRLDVW), 144-161 (AWLAAAMVAPAVIYLEPI), 164-184 (NFEFGQINVVLMTLVIADCVP), 193-213 (LLLGLAIALKLTPAVFLLYFL), 224-244 (TAATAVVASLAGFALAWSDSV), 281-301 (PRFILWVLACFAVLALTVWAA), 316-336 (APVLALVCVALFGLVVSPVSW), 360-380 (VWFTALTAAGLALTVWTPITL), and 395-415 (LAGGSYVWWAFAVIVVIGLVS). Residues 419 to 440 (THTGDAHETDEPLVPLARGEAG) are disordered.

This sequence belongs to the glycosyltransferase 87 family.

Its subcellular location is the cell membrane. The protein operates within phospholipid metabolism; phosphatidylinositol metabolism. Its function is as follows. Responsible for the addition of alpha-(1-2) mannose branches to the linear mannan core on the biosynthetic pathway to mature Lipoarabinomannan (LAM). In Mycolicibacterium smegmatis (strain ATCC 700084 / mc(2)155) (Mycobacterium smegmatis), this protein is Polyprenol-phosphate-mannose-dependent alpha-(1-2)-phosphatidylinositol mannoside mannosyltransferase.